We begin with the raw amino-acid sequence, 348 residues long: tRNA N6-adenosine threonylcarbamoyltransferase (348 aa).

Fe cation contacts are provided by histidine 118 and histidine 122. Substrate contacts are provided by residues 140-144 (LVSGG), aspartate 173, glycine 186, aspartate 190, and asparagine 279. Aspartate 309 lines the Fe cation pocket.

Belongs to the KAE1 / TsaD family. It depends on Fe(2+) as a cofactor.

The protein resides in the cytoplasm. The catalysed reaction is L-threonylcarbamoyladenylate + adenosine(37) in tRNA = N(6)-L-threonylcarbamoyladenosine(37) in tRNA + AMP + H(+). Its function is as follows. Required for the formation of a threonylcarbamoyl group on adenosine at position 37 (t(6)A37) in tRNAs that read codons beginning with adenine. Is involved in the transfer of the threonylcarbamoyl moiety of threonylcarbamoyl-AMP (TC-AMP) to the N6 group of A37, together with TsaE and TsaB. TsaD likely plays a direct catalytic role in this reaction. This chain is tRNA N6-adenosine threonylcarbamoyltransferase, found in Lactiplantibacillus plantarum (strain ATCC BAA-793 / NCIMB 8826 / WCFS1) (Lactobacillus plantarum).